Reading from the N-terminus, the 151-residue chain is HTH-type transcriptional regulator FL11 (151 aa).

One can recognise an HTH asnC-type domain in the interval 5–66 (LDEIDKKIIK…IIDPEALGYS (62 aa)). Positions 24 to 43 (LREISKITGLAESTIHERIR) form a DNA-binding region, H-T-H motif. L-arginine is bound at residue 98 to 104 (ETTGDYD). Residues Asn-118, Asp-122, and 133 to 135 (THT) each bind L-lysine. L-arginine is bound by residues Asp-122 and 133-135 (THT).

Homodimer. Binds DNA as a dimer and an octamer. The octamer formed with lysine is stable in solution, but the octamer formed with arginine is unstable without DNA. When crystallized in the absence of DNA, dimers are assembled into helical cylinders with six dimers per turn. In solution, predominantly behaves as a dimer.

Its activity is regulated as follows. In the famine mode, FL11 forms dimers and acts as a repressor, leading to growth arrest. In the feast mode, in the presence of high concentrations of lysine or arginine, four dimers assemble into an octamer and cover the fl11 and lysine biosynthesis promoters. This leads to the inhibition of fl11 expression and lysine biosynthesis, decrease of the FL11 concentration in the cell, derepression of the target genes and activation of the metabolism. Functionally, DNA-binding protein involved in the repression of transcription of a large number of genes, thereby arresting growth, in response to environmental changes. Binding sites are identified in promoters of approximately 200 transcription units, including genes involved in ATP synthesis, transmembrane transport, translation and DNA synthesis. This chain is HTH-type transcriptional regulator FL11, found in Pyrococcus horikoshii (strain ATCC 700860 / DSM 12428 / JCM 9974 / NBRC 100139 / OT-3).